The sequence spans 113 residues: uncharacterized protein (113 aa).

Residues 1-14 (MATRNALRIVSRRF) constitute a mitochondrion transit peptide. The segment at 41 to 79 (QKLARQGPGEQAAGSASEAKVAGATASASAESGPKVSED) is disordered. Residues 55–73 (SASEAKVAGATASASAESG) are compositionally biased toward low complexity.

It is found in the mitochondrion. This is an uncharacterized protein from Arabidopsis thaliana (Mouse-ear cress).